Here is a 624-residue protein sequence, read N- to C-terminus: DNA mismatch repair protein MutL (624 aa).

A disordered region spans residues 336–357; sequence GEGFHETSDSFSSRSSQHSDAR. Residues 344 to 353 are compositionally biased toward low complexity; that stretch reads DSFSSRSSQH.

This sequence belongs to the DNA mismatch repair MutL/HexB family.

This protein is involved in the repair of mismatches in DNA. It is required for dam-dependent methyl-directed DNA mismatch repair. May act as a 'molecular matchmaker', a protein that promotes the formation of a stable complex between two or more DNA-binding proteins in an ATP-dependent manner without itself being part of a final effector complex. This chain is DNA mismatch repair protein MutL, found in Chlorobium phaeobacteroides (strain BS1).